We begin with the raw amino-acid sequence, 192 residues long: Large ribosomal subunit protein uL5 (192 aa).

It belongs to the universal ribosomal protein uL5 family. In terms of assembly, part of the 50S ribosomal subunit; part of the 5S rRNA/L5/L18/L25 subcomplex. Contacts the 5S rRNA and the P site tRNA. Forms a bridge to the 30S subunit in the 70S ribosome.

Functionally, this is one of the proteins that bind and probably mediate the attachment of the 5S RNA into the large ribosomal subunit, where it forms part of the central protuberance. In the 70S ribosome it contacts protein S13 of the 30S subunit (bridge B1b), connecting the 2 subunits; this bridge is implicated in subunit movement. Contacts the P site tRNA; the 5S rRNA and some of its associated proteins might help stabilize positioning of ribosome-bound tRNAs. This Sphingopyxis alaskensis (strain DSM 13593 / LMG 18877 / RB2256) (Sphingomonas alaskensis) protein is Large ribosomal subunit protein uL5.